The following is a 463-amino-acid chain: Competence protein ComFA (463 aa).

Zn(2+)-binding residues include cysteine 60, cysteine 63, cysteine 84, and cysteine 87. Residues 133-285 form the Helicase ATP-binding domain; it reads IEAISKKEEL…LNGQLHSVRI (153 aa). Residue 146 to 153 participates in ATP binding; the sequence is AVCGAGKT. The DEAD box signature appears at 233–236; that stretch reads DEVD. A Helicase C-terminal domain is found at 317-463; sequence AVKRWIEFHV…ELAAKVECTD (147 aa).

The protein belongs to the DEAD box helicase family. As to quaternary structure, monomer and dimer in solution. Interacts with DprA and ComFC; ComFA-ComFC form rings about 150 Angstroms in diameter with apparent 6-fold symmetry. Zn(2+) is required as a cofactor.

Its subcellular location is the cytoplasm. Its function is as follows. Involved in transformation (genetic competence for DNA uptake). Required for DNA uptake but not for DNA binding to cells. DNA uptake is energy dependent, this protein may provide the driving force for DNA uptake. Does not have helicase activity, translocates on single-stranded (ss)DNA in a 5'-3' direction in an ATP-dependent manner, but does not unwind double-stranded (ds)DNA. ATP hydrolysis causes the release of ssDNA from ComFA. A ssDNA-stimulated ATPase; dsDNA does not stimulate ATPase. ATP hydrolysis causes the release of ssDNA from ComFA. Binds ssDNA but only very poorly to dsDNA in the absence of ATP. Binding to ssDNA does not require free DNA ends. This is Competence protein ComFA from Bacillus subtilis (strain 168).